We begin with the raw amino-acid sequence, 381 residues long: Chymosin (381 aa).

The signal sequence occupies residues 1–16; it reads MRGFVVLLAVFALSQA. The propeptide at 17 to 58 is activation peptide; it reads SGIVRIPLHKGKSLRRALKERGLLEDFLKNHQHAVSRKHSNS. The 305-residue stretch at 74–378 folds into the Peptidase A1 domain; it reads YFGKIYIGTP…DRASNLVGLA (305 aa). The active site involves Asp-92. Repeat 1 spans residues 92–102; the sequence is DTGSSDLWVPS. Intrachain disulfides connect Cys-105-Cys-110 and Cys-265-Cys-269. Asp-274 is an active-site residue. Copy 2 of the repeat occupies 274 to 284; that stretch reads DTGTSMLVGPG. Residues Cys-308 and Cys-341 are joined by a disulfide bond.

It belongs to the peptidase A1 family. Monomer.

It catalyses the reaction Broad specificity similar to that of pepsin A. Clots milk by cleavage of a single 104-Ser-Phe-|-Met-Ala-107 bond in kappa-chain of casein.. Inhibited by pepstatin. Hydrolyzes a variety of proteins. The chain is Chymosin (CYM) from Callithrix jacchus (White-tufted-ear marmoset).